The primary structure comprises 216 residues: ATP-dependent Clp protease proteolytic subunit (216 aa).

The active-site Nucleophile is S101. The active site involves H126.

It belongs to the peptidase S14 family. In terms of assembly, component of the chloroplastic Clp protease core complex.

It is found in the plastid. It localises to the chloroplast stroma. It carries out the reaction Hydrolysis of proteins to small peptides in the presence of ATP and magnesium. alpha-casein is the usual test substrate. In the absence of ATP, only oligopeptides shorter than five residues are hydrolyzed (such as succinyl-Leu-Tyr-|-NHMec, and Leu-Tyr-Leu-|-Tyr-Trp, in which cleavage of the -Tyr-|-Leu- and -Tyr-|-Trp bonds also occurs).. Functionally, cleaves peptides in various proteins in a process that requires ATP hydrolysis. Has a chymotrypsin-like activity. Plays a major role in the degradation of misfolded proteins. This is ATP-dependent Clp protease proteolytic subunit from Hordeum vulgare (Barley).